We begin with the raw amino-acid sequence, 99 residues long: MKIPVLPAVVLLSLLVLHSAQGATLGGPEEESTIENYASRPEAFNTPFLNIDKLRSAFKADEFLNWHALFESIKRKLPFLNWDAFPKLKGLRSATPDAQ.

The N-terminal stretch at 1–22 (MKIPVLPAVVLLSLLVLHSAQG) is a signal peptide.

Highly expressed in skin and detected at lower levels in thymus. In skin, found exclusively in lamellar granules of granular keratinocytes and in the intracellular space of the stratum corneum. Also highly expressed in oral mucosa, tongue, esophagus, and stomach, and at much lower levels in bladder and uterus. Not detected in gastrointestinal mucosa.

The protein resides in the secreted. May act as a soluble regulator of keratinocyte differentiation. May play an important role in embryonic skin morphogenesis. This Homo sapiens (Human) protein is Keratinocyte differentiation-associated protein (KRTDAP).